A 163-amino-acid chain; its full sequence is Nucleotide-binding protein NTHI1194 (163 aa).

This sequence belongs to the YajQ family.

Its function is as follows. Nucleotide-binding protein. This chain is Nucleotide-binding protein NTHI1194, found in Haemophilus influenzae (strain 86-028NP).